A 1151-amino-acid polypeptide reads, in one-letter code: Zinc finger protein ZFPM2 (1151 aa).

The segment covering 1–13 (MSRRKQSKPRQIK) has biased composition (basic residues). The segment at 1–102 (MSRRKQSKPR…ETDDWDGPGE (102 aa)) is disordered. Acidic residues-rich tracts occupy residues 18-33 (DAIE…EETD) and 70-82 (EGIQ…DGDT). The CCHC FOG-type 1 zinc-finger motif lies at 244-277 (IVNKDIFPCKSCGIWYRSERNLQAHLMYYCSGRQ). Residues Cys-252, Cys-255, His-268, and Cys-273 each coordinate Zn(2+). The C2H2-type 1 zinc finger occupies 296-320 (SLCPFPQCTKSFSNARALEMHLNSH). Lys-324 is covalently cross-linked (Glycyl lysine isopeptide (Lys-Gly) (interchain with G-Cter in SUMO1)). C2H2-type zinc fingers lie at residues 335-357 (LKCT…LFSH) and 363-385 (FRCN…QELH). Residues 389–487 (GKLPRESDME…RLASSPVQPN (99 aa)) form a disordered region. Composition is skewed to polar residues over residues 401–410 (PSATEDSLQP) and 419–431 (ELPQ…QTKD). A Glycyl lysine isopeptide (Lys-Gly) (interchain with G-Cter in SUMO2) cross-link involves residue Lys-444. Polar residues predominate over residues 447–485 (LFLTNQRPEIQPTTNKQSFSYTKIKSEPSSPRLASSPVQ). Lys-471 is covalently cross-linked (Glycyl lysine isopeptide (Lys-Gly) (interchain with G-Cter in SUMO1)). Phosphoserine is present on Ser-532. The segment at 542–575 (PLMPKGATCFECNITFNNLDNYLVHKKHYCSSRW) adopts a CCHC FOG-type 2 zinc-finger fold. 4 residues coordinate Zn(2+): Cys-550, Cys-553, His-566, and Cys-571. Phosphoserine is present on Ser-581. The tract at residues 636–683 (GPNGKGHDKDFSTQTKKLSTSSNNDDKINGKPVDVKNPSVPLVDGESD) is disordered. Residues 647–658 (STQTKKLSTSSN) show a composition bias toward polar residues. The CCHC FOG-type 3 zinc finger occupies 681-714 (ESDPNKTTCEACNITFSRHETYMVHKQYYCATRH). Cys-689, Cys-692, His-705, and Cys-710 together coordinate Zn(2+). The short motif at 736–740 (RKRRK) is the Nuclear localization signal element. The segment at 829–835 (PIDLSKK) is interaction with CTBP2. Residues 848 to 881 (KRLLDYHECTVCKISFNKVENYLAHKQNFCPVTA) form a CCHC FOG-type 4 zinc finger. The Zn(2+) site is built by Cys-856, Cys-859, His-872, and Cys-877. Ser-904 is modified (phosphoserine). Residues Lys-915 and Lys-955 each participate in a glycyl lysine isopeptide (Lys-Gly) (interchain with G-Cter in SUMO1) cross-link. Ser-1014 carries the phosphoserine modification. Residues 1051-1095 (DERPAANPQQENISQNPQHEDDHKSPSWISENPLAANENVSPGIP) are disordered. Polar residues predominate over residues 1057 to 1067 (NPQQENISQNP). Residues 1113 to 1146 (QAPTSGKYCRLCDIQFNNLSNFITHKKFYCSSHA) form a CCHC FOG-type 5 zinc finger. Positions 1121, 1124, 1137, and 1142 each coordinate Zn(2+).

This sequence belongs to the FOG (Friend of GATA) family. In terms of assembly, interacts with the N-terminal zinc-finger of GATA4, GATA5 and probably GATA6. Interacts with retinoid nuclear receptor RXRA when ligand bound. Interacts with corepressor CTBP2; this interaction is however not essential for corepressor activity. Able to bind GATA1 in vitro. Interacts with NR2F2 and NR2F6. Interacts with ATOH8; mediates indirect interaction with GATA4. Sumoylation reduces transcriptional repression activity. In terms of tissue distribution, widely expressed at low level.

The protein localises to the nucleus. In terms of biological role, transcription regulator that plays a central role in heart morphogenesis and development of coronary vessels from epicardium, by regulating genes that are essential during cardiogenesis. Essential cofactor that acts via the formation of a heterodimer with transcription factors of the GATA family GATA4, GATA5 and GATA6. Such heterodimer can both activate or repress transcriptional activity, depending on the cell and promoter context. Also required in gonadal differentiation, possibly be regulating expression of SRY. Probably acts a corepressor of NR2F2. The protein is Zinc finger protein ZFPM2 (ZFPM2) of Homo sapiens (Human).